A 517-amino-acid polypeptide reads, in one-letter code: Cytochrome P450 monooxygenase sdnE (517 aa).

Residues 4–24 (SSILQTLAVLYVLYLLGLIIY) traverse the membrane as a helical segment. The N-linked (GlcNAc...) asparagine glycan is linked to Asn111. A helical transmembrane segment spans residues 219–239 (FPVVFIILGLSPRAMLKLVVP). Heme is bound at residue Cys456.

It belongs to the cytochrome P450 family. Heme serves as cofactor.

It is found in the membrane. The protein operates within antibiotic biosynthesis. Cytochrome P450 monooxygenase; part of the gene cluster that mediates the biosynthesis of sordarin and hypoxysordarin, glycoside antibiotics with a unique tetracyclic diterpene aglycone structure. First, the geranylgeranyl diphosphate synthase sdnC constructs GGDP from farnesyl diphosphate and isopentenyl diphosphate. The diterpene cyclase sdnA then catalyzes the cyclization of GGDP to afford cycloaraneosene. Cycloaraneosene is then hydroxylated four times by the putative cytochrome P450 monooxygenases sdnB, sdnE, sdnF and sdnH to give a hydroxylated cycloaraneosene derivative such as cycloaraneosene-8,9,13,19-tetraol. Although the order of the hydroxylations is unclear, at least C8, C9 and C13 of the cycloaraneosene skeleton are hydroxylated before the sordaricin formation. Dehydration of the 13-hydroxy group of the hydroxylated cycloaraneosene derivative might be catalyzed by an unassigned hypothetical protein such as sdnG and sdnP to construct the cyclopentadiene moiety. The FAD-dependent oxidoreductase sdnN is proposed to catalyze the oxidation at C9 of the hydroxylated cycloaraneosene derivative and also catalyze the Baeyer-Villiger oxidation to give the lactone intermediate. The presumed lactone intermediate would be hydrolyzed to give an acrolein moiety and a carboxylate moiety. Then, [4+2]cycloaddition would occur between the acrolein moiety and the cyclopentadiene moiety to give sordaricin. SdnN might also be involved in the [4+2]cycloaddition after the hypothesized oxidation to accommodate the oxidized product and prompt the [4+2]cycloaddition. GDP-6-deoxy-D-altrose may be biosynthesized from GDP-D-mannose by the putative GDP-mannose-4,6-dehydratase sdnI and the short-chain dehydrogenase sdnK. The glycosyltransferase sdnJ catalyzes the attachment of 6-deoxy-D-altrose onto the 19-hydroxy group of sordaricin to give 4'-O-demethylsordarin. The methyltransferase sdnD would complete the biosynthesis of sordarin. Sordarin can be further modified into hypoxysordarin. The unique acyl chain at the 3'-hydroxy group of hypoxysordarin would be constructed by an iterative type I PKS sdnO and the trans-acting polyketide methyltransferase sdnL. SdnL would be responsible for the introduction of an alpha-methyl group of the polyketide chain. Alternatively, the beta-lactamase-like protein sdnR might be responsible for the cleavage and transfer of the polyketide chain from the PKS sdnO to sordarin. Two putative cytochrome P450 monooxygenases, sdnQ and sdnT, might catalyze the epoxidations of the polyketide chain to complete the biosynthesis of hypoxysordarin. Transcriptional regulators sdnM and sdnS are presumably encoded for the transcriptional regulation of the expression of the sdn gene cluster. This is Cytochrome P450 monooxygenase sdnE from Sordaria araneosa (Pleurage araneosa).